Here is a 388-residue protein sequence, read N- to C-terminus: Chorismate synthase (388 aa).

NADP(+) contacts are provided by Arg-39 and Arg-45. FMN-binding positions include Arg-130 to Ser-132, Asn-251 to Ala-252, Gly-296, Lys-311 to Thr-315, and Arg-337.

The protein belongs to the chorismate synthase family. Homotetramer. FMNH2 is required as a cofactor.

It carries out the reaction 5-O-(1-carboxyvinyl)-3-phosphoshikimate = chorismate + phosphate. It functions in the pathway metabolic intermediate biosynthesis; chorismate biosynthesis; chorismate from D-erythrose 4-phosphate and phosphoenolpyruvate: step 7/7. Its function is as follows. Catalyzes the anti-1,4-elimination of the C-3 phosphate and the C-6 proR hydrogen from 5-enolpyruvylshikimate-3-phosphate (EPSP) to yield chorismate, which is the branch point compound that serves as the starting substrate for the three terminal pathways of aromatic amino acid biosynthesis. This reaction introduces a second double bond into the aromatic ring system. The sequence is that of Chorismate synthase from Geobacillus sp. (strain WCH70).